The primary structure comprises 382 residues: Fimbrial usher domain-containing protein YdeT (382 aa).

This chain is Fimbrial usher domain-containing protein YdeT (ydeT), found in Escherichia coli (strain K12).